A 426-amino-acid polypeptide reads, in one-letter code: Serine--tRNA ligase (426 aa).

235–237 (TAE) contributes to the L-serine binding site. Residues 266–268 (RRE) and V282 contribute to the ATP site. E289 contacts L-serine. Residue 353-356 (EASS) coordinates ATP. Residue S389 participates in L-serine binding.

This sequence belongs to the class-II aminoacyl-tRNA synthetase family. Type-1 seryl-tRNA synthetase subfamily. As to quaternary structure, homodimer. The tRNA molecule binds across the dimer.

The protein resides in the cytoplasm. It catalyses the reaction tRNA(Ser) + L-serine + ATP = L-seryl-tRNA(Ser) + AMP + diphosphate + H(+). It carries out the reaction tRNA(Sec) + L-serine + ATP = L-seryl-tRNA(Sec) + AMP + diphosphate + H(+). It participates in aminoacyl-tRNA biosynthesis; selenocysteinyl-tRNA(Sec) biosynthesis; L-seryl-tRNA(Sec) from L-serine and tRNA(Sec): step 1/1. In terms of biological role, catalyzes the attachment of serine to tRNA(Ser). Is also able to aminoacylate tRNA(Sec) with serine, to form the misacylated tRNA L-seryl-tRNA(Sec), which will be further converted into selenocysteinyl-tRNA(Sec). The protein is Serine--tRNA ligase of Chlorobium chlorochromatii (strain CaD3).